We begin with the raw amino-acid sequence, 291 residues long: MSTEQTTKTPRVVIITGISGAGRRTAAHAVEDLGWYVVDNLPPAMLGALVDEIAANNIDRLAVVLDVRSRIMFDALGVAVNALDERGIDPAIVFLEASDETIVRRQESSRRPLPLQQGGHLLDAVALERRMLSDLRAEADLVIDTTSITARQLAQRIDHAFAEGIDEGLAFQVMSFGFKRGVPIDADLVFDVRFLPNPYWVPELRPKTGLSSDVASYVMAQAGATEFIDRVEQLLGGMAPGYLREGKKQVTVAVGCTGGKHRSTAISEELSTRLAARGHRTAVLHRDLGKE.

Residue 17 to 24 participates in ATP binding; sequence GISGAGRR. Residue 66–69 participates in GTP binding; sequence DVRS.

The protein belongs to the RapZ-like family.

In terms of biological role, displays ATPase and GTPase activities. In Cutibacterium acnes (strain DSM 16379 / KPA171202) (Propionibacterium acnes), this protein is Nucleotide-binding protein PPA0813.